The chain runs to 426 residues: Tryptophan--tRNA ligase (426 aa).

The 'HIGH' region signature appears at 66-74 (PSGEMHLGN). Residues 314-318 (KMSSS) carry the 'KMSKS' region motif.

This sequence belongs to the class-I aminoacyl-tRNA synthetase family.

It is found in the cytoplasm. It carries out the reaction tRNA(Trp) + L-tryptophan + ATP = L-tryptophyl-tRNA(Trp) + AMP + diphosphate + H(+). This chain is Tryptophan--tRNA ligase, found in Thermoplasma acidophilum (strain ATCC 25905 / DSM 1728 / JCM 9062 / NBRC 15155 / AMRC-C165).